Consider the following 343-residue polypeptide: UPF0284 protein Msed_0735 (343 aa).

The protein belongs to the UPF0284 family.

The chain is UPF0284 protein Msed_0735 from Metallosphaera sedula (strain ATCC 51363 / DSM 5348 / JCM 9185 / NBRC 15509 / TH2).